Reading from the N-terminus, the 357-residue chain is Chorismate synthase (357 aa).

NADP(+)-binding residues include Arg48 and Arg54. FMN contacts are provided by residues 125–127 (RSS), 238–239 (NA), Gly278, 293–297 (KPTSS), and Arg319.

This sequence belongs to the chorismate synthase family. Homotetramer. FMNH2 is required as a cofactor.

The catalysed reaction is 5-O-(1-carboxyvinyl)-3-phosphoshikimate = chorismate + phosphate. It participates in metabolic intermediate biosynthesis; chorismate biosynthesis; chorismate from D-erythrose 4-phosphate and phosphoenolpyruvate: step 7/7. Its function is as follows. Catalyzes the anti-1,4-elimination of the C-3 phosphate and the C-6 proR hydrogen from 5-enolpyruvylshikimate-3-phosphate (EPSP) to yield chorismate, which is the branch point compound that serves as the starting substrate for the three terminal pathways of aromatic amino acid biosynthesis. This reaction introduces a second double bond into the aromatic ring system. This Blochmanniella floridana protein is Chorismate synthase.